A 1245-amino-acid polypeptide reads, in one-letter code: MDNTERSSNGNIQAETEAKEEKKNIKKESVSLMGLFSAADKLDYFLMLLGGLGACIHGATLPLFFVFFGKMLDSLGNLSTDPKAISSRVSQNALYLVYLGLVNFVSAWIGVSCWMQTGERQTARLRINYLKSILAKDITFFDTEARDSNLIFHISSDAILVQDAIGDKTDHVLRYLSQFIAGFVIGFLSVWQLTLLTLGVVPLIAIAGGGYAIVMSTISEKSETAYADAGKVAEEVMSQVRTVYAFVGEEKAVKSYSNSLKKALKLGKRSGLAKGLGVGLTYSLLFCAWALLLWYASLLVRHGKTNGAKAFTTILNVIFSGFALGQAAPSLSAIAKGRVAAANIFRMIGNNNSESSQRLDEGTTLQNVAGRIEFQKVSFAYPSRPNMVFENLSFTIRSGKTFAFVGPSGSGKSTIISMVQRFYEPNSGEILLDGNDIKSLKLKWFREQLGLVSQEPALFATTIASNILLGKENANMDQIIEAAKAANADSFIKSLPNGYNTQVGEGGTQLSGGQKQRIAIARAVLRNPKILLLDEATSALDAESEKIVQQALDNVMEKRTTIVVAHRLSTIRNVDKIVVLRDGQVRETGSHSELMLRGGDYATLVNCQETEPQENSRSIMSETCKSQAGSSSSRRVSSSRRTSSFRVDQEKTKNDDSKKDFSSSSMIWELIKLNSPEWPYALLGSIGAVLAGAQTPLFSMGIAYVLTAFYSPFPNVIKRDVEKVAIIFAGAGIVTAPIYLLQHYFYTLMGERLTSRVRLSLFSAILSNEIGWFDLDENNTGSLTSILAADATLVRSALADRLSTIVQNLSLTVTALALAFFYSWRVAAVVTACFPLLIAASLTEQLFLKGFGGDYTRAYSRATSVAREAIANIRTVAAYGAEKQISEQFTCELSKPTKNAFVRGHISGFGYGLSQFLAFCSYALGLWYVSVLINHKETNFGDSIKSFMVLIVTAFSVSETLALTPDIVKGTQALGSVFRVLHRETKISPDQPNSRMVSQVKGDIEFRNVSFVYPTRPEIDIFKNLNLRVSAGKSLAVVGPSGSGKSTVIGLIMRFYDPSNGNLCIDGQDIKTLNLRSLRKKLALVQQEPALFSTTIYENIKYGNENASEAEIMEAAKAANAHEFIIKMEEGYKTHAGDKGVQLSGGQKQRVAIARAVLKDPSVLLLDEATSALDTSSEKLVQEALDKLMKGRTTVLVAHRLSTIRKADTVAVLHKGRVVEKGSHRELVSIPNGFYKQLTSLQEVL.

Residues 1–14 show a composition bias toward polar residues; sequence MDNTERSSNGNIQA. Positions 1–20 are disordered; it reads MDNTERSSNGNIQAETEAKE. One can recognise an ABC transmembrane type-1 1 domain in the interval 47 to 336; that stretch reads MLLGGLGACI…AAPSLSAIAK (290 aa). The helical transmembrane segment at 48-68 threads the bilayer; sequence LLGGLGACIHGATLPLFFVFF. N-linked (GlcNAc...) asparagine glycosylation occurs at Asn77. The next 5 helical transmembrane spans lie at 94–114, 171–191, 195–215, 276–296, and 314–334; these read LYLV…VSCW, HVLR…LSVW, LLTL…AIVM, LGVG…LWYA, and ILNV…LSAI. 2 N-linked (GlcNAc...) asparagine glycosylation sites follow: Asn351 and Asn391. Residues 372–607 enclose the ABC transporter 1 domain; that stretch reads IEFQKVSFAY…GGDYATLVNC (236 aa). 406-413 contacts ATP; the sequence is GPSGSGKS. The span at 610 to 629 shows a compositional bias: polar residues; sequence TEPQENSRSIMSETCKSQAG. Positions 610-660 are disordered; sequence TEPQENSRSIMSETCKSQAGSSSSRRVSSSRRTSSFRVDQEKTKNDDSKKD. Positions 630-646 are enriched in low complexity; the sequence is SSSSRRVSSSRRTSSFR. A compositionally biased stretch (basic and acidic residues) spans 647-660; it reads VDQEKTKNDDSKKD. Positions 681 to 969 constitute an ABC transmembrane type-1 2 domain; sequence ALLGSIGAVL…TLALTPDIVK (289 aa). The next 2 membrane-spanning stretches (helical) occupy residues 686 to 706 and 725 to 745; these read IGAV…AYVL and AIIF…QHYF. Asn778 carries an N-linked (GlcNAc...) asparagine glycan. The next 4 membrane-spanning stretches (helical) occupy residues 805–822, 828–848, 913–933, and 947–967; these read IVQN…AFFY, AVVT…QLFL, LSQF…SVLI, and FMVL…TPDI. In terms of domain architecture, ABC transporter 2 spans 1004–1240; the sequence is IEFRNVSFVY…PNGFYKQLTS (237 aa). N-linked (GlcNAc...) asparagine glycosylation occurs at Asn1008. 1039–1046 lines the ATP pocket; that stretch reads GPSGSGKS. The N-linked (GlcNAc...) asparagine glycan is linked to Asn1106.

It belongs to the ABC transporter superfamily. ABCB family. Multidrug resistance exporter (TC 3.A.1.201) subfamily.

The protein localises to the membrane. This chain is ABC transporter B family member 13 (ABCB13), found in Arabidopsis thaliana (Mouse-ear cress).